Here is a 493-residue protein sequence, read N- to C-terminus: 3-octaprenyl-4-hydroxybenzoate carboxy-lyase (493 aa).

N172 is a Mn(2+) binding site. Residues 175–177 (IYR), 189–191 (RWL), and 194–195 (RG) each bind prenylated FMN. Mn(2+) is bound at residue E238. D287 acts as the Proton donor in catalysis.

Belongs to the UbiD family. Homohexamer. It depends on prenylated FMN as a cofactor. Mn(2+) serves as cofactor.

It localises to the cell membrane. The catalysed reaction is a 4-hydroxy-3-(all-trans-polyprenyl)benzoate + H(+) = a 2-(all-trans-polyprenyl)phenol + CO2. Its pathway is cofactor biosynthesis; ubiquinone biosynthesis. In terms of biological role, catalyzes the decarboxylation of 3-octaprenyl-4-hydroxy benzoate to 2-octaprenylphenol, an intermediate step in ubiquinone biosynthesis. This is 3-octaprenyl-4-hydroxybenzoate carboxy-lyase from Shewanella frigidimarina (strain NCIMB 400).